Here is a 152-residue protein sequence, read N- to C-terminus: Lipoprotein signal peptidase (152 aa).

3 helical membrane passes run 33–53 (VVPP…FGLL), 58–78 (MLFV…YFKI), and 83–102 (PVLD…NLAD). Residues aspartate 111 and aspartate 125 contribute to the active site. Residues 120–140 (VFNLADTAIVTGAFLLAWALL) traverse the membrane as a helical segment.

It belongs to the peptidase A8 family.

The protein resides in the cell membrane. It carries out the reaction Release of signal peptides from bacterial membrane prolipoproteins. Hydrolyzes -Xaa-Yaa-Zaa-|-(S,diacylglyceryl)Cys-, in which Xaa is hydrophobic (preferably Leu), and Yaa (Ala or Ser) and Zaa (Gly or Ala) have small, neutral side chains.. The protein operates within protein modification; lipoprotein biosynthesis (signal peptide cleavage). In terms of biological role, this protein specifically catalyzes the removal of signal peptides from prolipoproteins. The polypeptide is Lipoprotein signal peptidase (Pelotomaculum thermopropionicum (strain DSM 13744 / JCM 10971 / SI)).